The primary structure comprises 285 residues: Energy-coupling factor transporter ATP-binding protein EcfA2 (285 aa).

The region spanning 3-245 (IKIENLNHIY…VETLEKIGLA (243 aa)) is the ABC transporter domain. 40–47 (GHTGSGKS) serves as a coordination point for ATP.

It belongs to the ABC transporter superfamily. Energy-coupling factor EcfA family. In terms of assembly, forms a stable energy-coupling factor (ECF) transporter complex composed of 2 membrane-embedded substrate-binding proteins (S component), 2 ATP-binding proteins (A component) and 2 transmembrane proteins (T component).

It localises to the cell membrane. ATP-binding (A) component of a common energy-coupling factor (ECF) ABC-transporter complex. Unlike classic ABC transporters this ECF transporter provides the energy necessary to transport a number of different substrates. In Clostridium perfringens (strain 13 / Type A), this protein is Energy-coupling factor transporter ATP-binding protein EcfA2.